The sequence spans 320 residues: GTP 3',8-cyclase (320 aa).

The region spanning 5–222 is the Radical SAM core domain; that stretch reads KLSRPLKVLR…LMKKEFTFYP (218 aa). Residue Arg-14 participates in GTP binding. Cys-21, Cys-25, and Cys-28 together coordinate [4Fe-4S] cluster. Arg-65 provides a ligand contact to GTP. Gly-69 lines the S-adenosyl-L-methionine pocket. Thr-96 provides a ligand contact to GTP. Ser-120 is an S-adenosyl-L-methionine binding site. Residue Lys-157 coordinates GTP. Met-191 is a binding site for S-adenosyl-L-methionine. [4Fe-4S] cluster is bound by residues Cys-253 and Cys-256. Position 258–260 (258–260) interacts with GTP; sequence RIR. Cys-270 contacts [4Fe-4S] cluster.

The protein belongs to the radical SAM superfamily. MoaA family. Monomer and homodimer. [4Fe-4S] cluster is required as a cofactor.

It catalyses the reaction GTP + AH2 + S-adenosyl-L-methionine = (8S)-3',8-cyclo-7,8-dihydroguanosine 5'-triphosphate + 5'-deoxyadenosine + L-methionine + A + H(+). It functions in the pathway cofactor biosynthesis; molybdopterin biosynthesis. In terms of biological role, catalyzes the cyclization of GTP to (8S)-3',8-cyclo-7,8-dihydroguanosine 5'-triphosphate. This Aquifex aeolicus (strain VF5) protein is GTP 3',8-cyclase.